The sequence spans 617 residues: Na(+)/H(+) antiporter NhaA 1 (617 aa).

Positions Met-1–Thr-26 are disordered. Residues Met-1 to Trp-433 are na(+)/H(+) antiporter NhaA. The next 11 helical transmembrane spans lie at Ala-33 to Ala-53, Met-75 to Leu-95, Ala-113 to Phe-133, His-141 to Ile-161, Leu-171 to Leu-191, Val-198 to Pro-218, Ile-234 to Ile-254, Val-304 to Leu-324, Gly-341 to Ile-361, Ile-378 to Ile-398, and Ile-411 to Thr-431. The region spanning Leu-434–Gly-617 is the Thioredoxin domain.

It in the N-terminal section; belongs to the NhaA Na(+)/H(+) (TC 2.A.33) antiporter family.

The protein localises to the cell membrane. The enzyme catalyses Na(+)(in) + 2 H(+)(out) = Na(+)(out) + 2 H(+)(in). Its function is as follows. Na(+)/H(+) antiporter that extrudes sodium in exchange for external protons. This chain is Na(+)/H(+) antiporter NhaA 1, found in Mycolicibacterium gilvum (strain PYR-GCK) (Mycobacterium gilvum (strain PYR-GCK)).